The primary structure comprises 576 residues: Cilia- and flagella-associated protein 100 (576 aa).

The interval 1 to 29 (MPIYDEASVPGTAAGRSTTDVGATAGANP) is disordered. Coiled coils occupy residues 125 to 226 (IFLL…CRRY), 254 to 311 (VAEW…IMKE), and 342 to 408 (YKQL…LKDR). 3 disordered regions span residues 417–439 (TLSMGSSNAPTSSVTGSSGPGGP), 495–519 (AEKAREKDRRKVARDEKLSTQHREH), and 538–563 (TGKPLMFRSAPPQRKKVVQADDRNDE).

The protein belongs to the CFAP100 family. As to quaternary structure, interacts with FAP73; form the modifier of inner arm (MIA) complex.

It localises to the cytoplasm. The protein localises to the cytoskeleton. Its subcellular location is the flagellum axoneme. Functionally, as part of MIA, a complex associated with the outer doublet microtubules of the axoneme, may play a role in ciliary/flagellar motility by regulating the assembly and the activity of axonemal inner dynein arm. In Chlamydomonas reinhardtii (Chlamydomonas smithii), this protein is Cilia- and flagella-associated protein 100.